The sequence spans 534 residues: Peptide chain release factor 3 (534 aa).

In terms of domain architecture, tr-type G spans 9 to 278; the sequence is ARRRTFAIIS…FFVEHAPSPQ (270 aa). Residues 18 to 25, 86 to 90, and 140 to 143 each bind GTP; these read SHPDAGKT, DTPGH, and NKLD.

It belongs to the TRAFAC class translation factor GTPase superfamily. Classic translation factor GTPase family. PrfC subfamily.

It localises to the cytoplasm. Increases the formation of ribosomal termination complexes and stimulates activities of RF-1 and RF-2. It binds guanine nucleotides and has strong preference for UGA stop codons. It may interact directly with the ribosome. The stimulation of RF-1 and RF-2 is significantly reduced by GTP and GDP, but not by GMP. The protein is Peptide chain release factor 3 of Xylella fastidiosa (strain M23).